We begin with the raw amino-acid sequence, 187 residues long: Elongation factor P (187 aa).

Belongs to the elongation factor P family.

The protein resides in the cytoplasm. It functions in the pathway protein biosynthesis; polypeptide chain elongation. In terms of biological role, involved in peptide bond synthesis. Stimulates efficient translation and peptide-bond synthesis on native or reconstituted 70S ribosomes in vitro. Probably functions indirectly by altering the affinity of the ribosome for aminoacyl-tRNA, thus increasing their reactivity as acceptors for peptidyl transferase. The chain is Elongation factor P from Parasynechococcus marenigrum (strain WH8102).